Here is a 234-residue protein sequence, read N- to C-terminus: Peptidase E (234 aa).

Residues serine 123, aspartate 138, and histidine 160 each act as charge relay system in the active site.

This sequence belongs to the peptidase S51 family.

The protein localises to the cytoplasm. It carries out the reaction Dipeptidase E catalyzes the hydrolysis of dipeptides Asp-|-Xaa. It does not act on peptides with N-terminal Glu, Asn or Gln, nor does it cleave isoaspartyl peptides.. Hydrolyzes dipeptides containing N-terminal aspartate residues. May play a role in allowing the cell to use peptide aspartate to spare carbon otherwise required for the synthesis of the aspartate family of amino acids. The polypeptide is Peptidase E (Pasteurella multocida (strain Pm70)).